The sequence spans 79 residues: Acyl carrier protein (79 aa).

In terms of domain architecture, Carrier spans 2-77; it reads ESIEQRVKKI…QAIDYINSHG (76 aa). Ser-37 is modified (O-(pantetheine 4'-phosphoryl)serine).

This sequence belongs to the acyl carrier protein (ACP) family. In terms of processing, 4'-phosphopantetheine is transferred from CoA to a specific serine of apo-ACP by AcpS. This modification is essential for activity because fatty acids are bound in thioester linkage to the sulfhydryl of the prosthetic group.

It localises to the cytoplasm. The protein operates within lipid metabolism; fatty acid biosynthesis. Its function is as follows. Carrier of the growing fatty acid chain in fatty acid biosynthesis. This Bordetella avium (strain 197N) protein is Acyl carrier protein.